The following is a 295-amino-acid chain: Ribosomal RNA small subunit methyltransferase A (295 aa).

S-adenosyl-L-methionine contacts are provided by asparagine 29, leucine 31, glycine 56, glutamate 77, aspartate 102, and asparagine 128.

The protein belongs to the class I-like SAM-binding methyltransferase superfamily. rRNA adenine N(6)-methyltransferase family. RsmA subfamily.

It localises to the cytoplasm. It carries out the reaction adenosine(1518)/adenosine(1519) in 16S rRNA + 4 S-adenosyl-L-methionine = N(6)-dimethyladenosine(1518)/N(6)-dimethyladenosine(1519) in 16S rRNA + 4 S-adenosyl-L-homocysteine + 4 H(+). Functionally, specifically dimethylates two adjacent adenosines (A1518 and A1519) in the loop of a conserved hairpin near the 3'-end of 16S rRNA in the 30S particle. May play a critical role in biogenesis of 30S subunits. The sequence is that of Ribosomal RNA small subunit methyltransferase A from Listeria innocua serovar 6a (strain ATCC BAA-680 / CLIP 11262).